Reading from the N-terminus, the 521-residue chain is uncharacterized protein (521 aa).

The interval 1–25 (MLQRSLGVNGRKLAMSARSAKRERK) is disordered. The next 6 helical transmembrane spans lie at 68 to 88 (GAVW…GAVL), 114 to 134 (VLIV…SLTV), 160 to 180 (VVLA…HTVG), 192 to 212 (VAVT…IYFL), 290 to 310 (ALLV…GWCW), and 399 to 419 (LLFW…CAQI).

The protein localises to the cell membrane. This is an uncharacterized protein from Mycobacterium tuberculosis (strain CDC 1551 / Oshkosh).